A 179-amino-acid chain; its full sequence is ATP-dependent protease subunit HslV (179 aa).

Threonine 8 is a catalytic residue. Serine 164, cysteine 167, and threonine 170 together coordinate Na(+).

This sequence belongs to the peptidase T1B family. HslV subfamily. A double ring-shaped homohexamer of HslV is capped on each side by a ring-shaped HslU homohexamer. The assembly of the HslU/HslV complex is dependent on binding of ATP.

It is found in the cytoplasm. The enzyme catalyses ATP-dependent cleavage of peptide bonds with broad specificity.. Its activity is regulated as follows. Allosterically activated by HslU binding. Its function is as follows. Protease subunit of a proteasome-like degradation complex believed to be a general protein degrading machinery. The protein is ATP-dependent protease subunit HslV of Staphylococcus carnosus (strain TM300).